Here is a 78-residue protein sequence, read N- to C-terminus: Protein SlyX homolog (78 aa).

It belongs to the SlyX family.

This is Protein SlyX homolog from Xylella fastidiosa (strain M23).